We begin with the raw amino-acid sequence, 395 residues long: Multidrug resistance protein MdtL (395 aa).

12 helical membrane-spanning segments follow: residues 4–24 (FLLC…MYLV), 42–62 (IAFS…GKIA), 69–89 (PVAI…SRAS), 93–113 (LFLS…VVAF), 131–151 (LLNG…HLIM), 158–178 (SLFY…LFIL), 217–237 (VSVI…VMGF), 247–267 (ALTA…LGLF), 271–291 (TLML…SLAH), 295–315 (VTLF…GVAM), 328–350 (VASS…LAAI), and 355–377 (AMNM…IFSV).

This sequence belongs to the major facilitator superfamily. DHA1 family. MdtL (TC 2.A.1.2.22) subfamily.

The protein resides in the cell inner membrane. The protein is Multidrug resistance protein MdtL of Salmonella dublin (strain CT_02021853).